A 266-amino-acid polypeptide reads, in one-letter code: E3 ubiquitin-protein ligase RNF170 (266 aa).

At 1 to 26 (MEGSVCVDGAAAPAPDEASLIEGVSN) the chain is on the lumenal side. A helical transmembrane segment spans residues 27-47 (AVLLVLVLSVTLLAGLTTLLC). Over 48–209 (RSEQQRIHPE…GGLFWMFRVR (162 aa)) the chain is Cytoplasmic. An RING-type zinc finger spans residues 88–131 (CPVCLQQAVLPVETNCGHLFCGSCIIAYWRYGTWLGAISCPICR). The helical transmembrane segment at 210–230 (ILLCVCGALAYLVSPLDFLPE) threads the bilayer. Gly231 is a topological domain (lumenal). The helical transmembrane segment at 232–252 (VLGLLGFLDDFFVILLLFIYI) threads the bilayer. At 253-266 (SIMYREVVTQRLAG) the chain is on the cytoplasmic side.

In terms of tissue distribution, highly expressed in the developing brain, and less within intersomitic structures of the trunk.

Its subcellular location is the endoplasmic reticulum membrane. It catalyses the reaction S-ubiquitinyl-[E2 ubiquitin-conjugating enzyme]-L-cysteine + [acceptor protein]-L-lysine = [E2 ubiquitin-conjugating enzyme]-L-cysteine + N(6)-ubiquitinyl-[acceptor protein]-L-lysine.. It functions in the pathway protein modification; protein ubiquitination. E3 ubiquitin-protein ligase that plays an essential role in stimulus-induced inositol 1,4,5-trisphosphate receptor (ITPR) ubiquitination and degradation via the endoplasmic reticulum-associated degradation (ERAD) pathway. Also involved in ITPR turnover in resting cells. The protein is E3 ubiquitin-protein ligase RNF170 (rnf170) of Danio rerio (Zebrafish).